Reading from the N-terminus, the 297-residue chain is Salivary glue protein Sgs-4 (297 aa).

The first 21 residues, 1-21, serve as a signal peptide directing secretion; that stretch reads MRLELLVVLLVGLAALAPSGS. A run of 21 repeats spans residues 26-32, 33-39, 40-46, 47-53, 54-60, 61-67, 68-74, 75-81, 82-88, 89-95, 96-102, 103-109, 110-116, 117-123, 124-130, 131-137, 138-144, 145-151, 152-158, 159-165, and 166-172. The interval 26 to 84 is disordered; it reads TEPPRCETEPPRCETEPPRCETEPPRCETEPPRCETTTPKCETTPPTCRTEPPTCKTEP. The segment at 26-179 is 22 X 7 AA approximate tandem repeats of T-[ETK]-[PT]-P-[RKT]-C-[ERK]; it reads TEPPRCETEP…TCKTEPPCEK (154 aa). Basic and acidic residues predominate over residues 27 to 58; sequence EPPRCETEPPRCETEPPRCETEPPRCETEPPR. Residues 59-84 are compositionally biased toward low complexity; the sequence is CETTTPKCETTPPTCRTEPPTCKTEP. The span at 141–174 shows a compositional bias: low complexity; that stretch reads PTCKTEPPTCRTEPPTCKTEPPTCKTEPPTCKTE. Disordered stretches follow at residues 141–218 and 243–297; these read PTCK…SGCG and PDSK…KGGC. The 22; approximate repeat unit spans residues 173 to 179; that stretch reads TEPPCEK. Basic residues-rich tracts occupy residues 181–208 and 282–291; these read CTKR…HHNR and NTTKKPRKTQ.

In terms of tissue distribution, salivary gland.

The protein localises to the secreted. The polypeptide is Salivary glue protein Sgs-4 (Sgs4) (Drosophila melanogaster (Fruit fly)).